Reading from the N-terminus, the 338-residue chain is Homoserine kinase (338 aa).

Belongs to the GHMP kinase family. Homoserine kinase subfamily.

It carries out the reaction L-homoserine + ATP = O-phospho-L-homoserine + ADP + H(+). The protein operates within amino-acid biosynthesis; L-threonine biosynthesis; L-threonine from L-aspartate: step 4/5. Functionally, commits homoserine to the threonine biosynthesis pathway by catalyzing its O-phosphorylation. This chain is Homoserine kinase, found in Schizosaccharomyces pombe (strain 972 / ATCC 24843) (Fission yeast).